The sequence spans 402 residues: 1-deoxy-D-xylulose 5-phosphate reductoisomerase (402 aa).

6 residues coordinate NADPH: Thr-10, Gly-11, Ser-12, Ile-13, Asn-38, and Asn-124. Position 125 (Lys-125) interacts with 1-deoxy-D-xylulose 5-phosphate. Position 126 (Glu-126) interacts with NADPH. Residue Asp-150 coordinates Mn(2+). Residues Ser-151, Glu-152, Ser-186, and His-209 each coordinate 1-deoxy-D-xylulose 5-phosphate. A Mn(2+)-binding site is contributed by Glu-152. Gly-215 contacts NADPH. 1-deoxy-D-xylulose 5-phosphate is bound by residues Ser-222, Asn-227, Lys-228, and Glu-231. Glu-231 lines the Mn(2+) pocket.

This sequence belongs to the DXR family. It depends on Mg(2+) as a cofactor. Mn(2+) is required as a cofactor.

It carries out the reaction 2-C-methyl-D-erythritol 4-phosphate + NADP(+) = 1-deoxy-D-xylulose 5-phosphate + NADPH + H(+). It participates in isoprenoid biosynthesis; isopentenyl diphosphate biosynthesis via DXP pathway; isopentenyl diphosphate from 1-deoxy-D-xylulose 5-phosphate: step 1/6. Functionally, catalyzes the NADPH-dependent rearrangement and reduction of 1-deoxy-D-xylulose-5-phosphate (DXP) to 2-C-methyl-D-erythritol 4-phosphate (MEP). The protein is 1-deoxy-D-xylulose 5-phosphate reductoisomerase of Vibrio vulnificus (strain CMCP6).